A 96-amino-acid polypeptide reads, in one-letter code: SPbeta prophage-derived uncharacterized protein YosV (96 aa).

This is SPbeta prophage-derived uncharacterized protein YosV (yosV) from Bacillus subtilis (strain 168).